Here is a 1380-residue protein sequence, read N- to C-terminus: DNA-directed RNA polymerase subunit beta (1380 aa).

Belongs to the RNA polymerase beta chain family. In terms of assembly, the RNAP catalytic core consists of 2 alpha, 1 beta, 1 beta' and 1 omega subunit. When a sigma factor is associated with the core the holoenzyme is formed, which can initiate transcription.

It catalyses the reaction RNA(n) + a ribonucleoside 5'-triphosphate = RNA(n+1) + diphosphate. Functionally, DNA-dependent RNA polymerase catalyzes the transcription of DNA into RNA using the four ribonucleoside triphosphates as substrates. The chain is DNA-directed RNA polymerase subunit beta from Ehrlichia ruminantium (strain Welgevonden).